A 361-amino-acid polypeptide reads, in one-letter code: Histidinol-phosphate aminotransferase (361 aa).

K219 carries the post-translational modification N6-(pyridoxal phosphate)lysine.

It belongs to the class-II pyridoxal-phosphate-dependent aminotransferase family. Histidinol-phosphate aminotransferase subfamily. In terms of assembly, homodimer. Pyridoxal 5'-phosphate serves as cofactor.

It catalyses the reaction L-histidinol phosphate + 2-oxoglutarate = 3-(imidazol-4-yl)-2-oxopropyl phosphate + L-glutamate. It functions in the pathway amino-acid biosynthesis; L-histidine biosynthesis; L-histidine from 5-phospho-alpha-D-ribose 1-diphosphate: step 7/9. The protein is Histidinol-phosphate aminotransferase of Cereibacter sphaeroides (strain KD131 / KCTC 12085) (Rhodobacter sphaeroides).